The primary structure comprises 134 residues: uncharacterized protein (134 aa).

This sequence belongs to the orthopoxviruses B21 protein family.

This is an uncharacterized protein from Bos taurus (Bovine).